A 217-amino-acid polypeptide reads, in one-letter code: Cytidylate kinase (217 aa).

9-17 contributes to the ATP binding site; sequence GPAGSGKTT.

This sequence belongs to the cytidylate kinase family. Type 1 subfamily.

It is found in the cytoplasm. The enzyme catalyses CMP + ATP = CDP + ADP. The catalysed reaction is dCMP + ATP = dCDP + ADP. This chain is Cytidylate kinase, found in Thermosipho melanesiensis (strain DSM 12029 / CIP 104789 / BI429).